The sequence spans 482 residues: MQWETVIGLEIHAQLATRSKIFSGSATAFGAEPNTQASLIDLGMPGTLPVLNEETVRMAVRFGLAIEAEIGHTNVFARKNYFYPDLPKGYQTSQMDKPIVGKGHLDITLEDGTLKRIGITRAHLEEDAGKSLHEDFHGMTGIDLNRAGTPLLEIVSEPDIRSAKEAVAYVKAIHALVRYLGICDGNMAEGSLRCDCNVSVRPRGQEAFGTRAEIKNVNSFRFIEKAINHEIQRQIELIEDGGKVIQETRLYDPNKDETRSMRGKEEANDYRYFPCPDLLPVVLEDGFVERLRETLPELPNQKRERFQSQYGLSAYDASVLSASREMAEYFEAVFEVCGDAKLAANWVMGELSSLLNKEGLEIERSPVSAEQLGGLIRRIQDNTISGKIAKMVFEALAADEGASADAIIERKGLKQVTDTGAIESMLDEMLAANAAQVEQYRAADEAKRAKMFGFFVGQAMKASKGKANPGQVNELLKKKLEG.

The protein belongs to the GatB/GatE family. GatB subfamily. As to quaternary structure, heterotrimer of A, B and C subunits.

It catalyses the reaction L-glutamyl-tRNA(Gln) + L-glutamine + ATP + H2O = L-glutaminyl-tRNA(Gln) + L-glutamate + ADP + phosphate + H(+). The catalysed reaction is L-aspartyl-tRNA(Asn) + L-glutamine + ATP + H2O = L-asparaginyl-tRNA(Asn) + L-glutamate + ADP + phosphate + 2 H(+). In terms of biological role, allows the formation of correctly charged Asn-tRNA(Asn) or Gln-tRNA(Gln) through the transamidation of misacylated Asp-tRNA(Asn) or Glu-tRNA(Gln) in organisms which lack either or both of asparaginyl-tRNA or glutaminyl-tRNA synthetases. The reaction takes place in the presence of glutamine and ATP through an activated phospho-Asp-tRNA(Asn) or phospho-Glu-tRNA(Gln). This is Aspartyl/glutamyl-tRNA(Asn/Gln) amidotransferase subunit B from Azotobacter vinelandii (strain DJ / ATCC BAA-1303).